The primary structure comprises 162 residues: UPF0178 protein RHOS4_24670 (162 aa).

It belongs to the UPF0178 family.

This Cereibacter sphaeroides (strain ATCC 17023 / DSM 158 / JCM 6121 / CCUG 31486 / LMG 2827 / NBRC 12203 / NCIMB 8253 / ATH 2.4.1.) (Rhodobacter sphaeroides) protein is UPF0178 protein RHOS4_24670.